The chain runs to 1585 residues: Sterol 3-beta-glucosyltransferase (1585 aa).

Residues 1–18 (MSPPISPTPPPLQPPFPP) are compositionally biased toward pro residues. Disordered regions lie at residues 1-151 (MSPP…ESSF), 177-225 (PWEE…PTHT), and 249-279 (YQYATPETSSRRTSAAGSESSSEGEVPLPKG). Polar residues-rich tracts occupy residues 65 to 92 (DQATNSSNDSLIPSRQAPNQEETENAIT), 105 to 123 (DAQTVRFSSSSPASYSTHE), and 132 to 148 (PRTSSRAPNTASSQMAE). The span at 178 to 194 (WEEDDDSDDGEDDDEFI) shows a compositional bias: acidic residues. The segment covering 255 to 273 (ETSSRRTSAAGSESSSEGE) has biased composition (low complexity). The GRAM 1 domain maps to 387 to 555 (ERLMEVFGLE…EAIVDVEKSP (169 aa)). A PH domain is found at 438–530 (LLVKSGPLHK…WVKAIQKVMF (93 aa)). Disordered regions lie at residues 625–645 (TSHATIKRHGTDSSAEKLGMA) and 666–852 (DGEP…GSES). Residues 670–689 (LEEHSQGPHHNDEDASHLPH) are compositionally biased toward basic and acidic residues. Composition is skewed to polar residues over residues 760–785 (TDSSTTVTESGPSLRSRTGRTKQASV), 806–817 (NKPSVVDSNSAE), and 827–840 (SWTSETSSGSQMVK). A GRAM 2 domain is found at 862-933 (RKFRTFFALS…RDLYGLKAQK (72 aa)). 10 residues coordinate UDP-alpha-D-glucose: S1043, R1044, D1046, I1358, H1360, H1373, G1377, T1378, D1397, and Q1398. A disordered region spans residues 1499-1552 (NRVRSRSRSRSRSSQGRFSPRRHTVDDDGWSVVSGGSRSRSGSASAVTSPERRP). Positions 1529 to 1545 (SVVSGGSRSRSGSASAV) are enriched in low complexity.

Belongs to the glycosyltransferase 28 family.

Its subcellular location is the cytoplasm. The protein localises to the membrane. It carries out the reaction a sterol + UDP-alpha-D-glucose = a sterol 3-beta-D-glucoside + UDP + H(+). The enzyme catalyses ergosterol + UDP-alpha-D-glucose = ergosteryl 3-beta-D-glucoside + UDP + H(+). Its function is as follows. Sterol glycosyltransferase responsible for the glycosylation of ergosterol to form ergosterol-glucoside. This chain is Sterol 3-beta-glucosyltransferase, found in Cryptococcus neoformans var. neoformans serotype D (strain B-3501A) (Filobasidiella neoformans).